The sequence spans 160 residues: UPF0178 protein PA5247 (160 aa).

The protein belongs to the UPF0178 family.

The polypeptide is UPF0178 protein PA5247 (Pseudomonas aeruginosa (strain ATCC 15692 / DSM 22644 / CIP 104116 / JCM 14847 / LMG 12228 / 1C / PRS 101 / PAO1)).